Reading from the N-terminus, the 128-residue chain is uncharacterized protein (128 aa).

C10 and C13 form a disulfide bridge.

Belongs to the ArsC family.

This is an uncharacterized protein from Ureaplasma parvum serovar 3 (strain ATCC 700970).